Reading from the N-terminus, the 191-residue chain is Xanthine phosphoribosyltransferase (191 aa).

Xanthine is bound by residues L20 and N27. A128–A132 contributes to the 5-phospho-alpha-D-ribose 1-diphosphate binding site. Xanthine is bound at residue K156.

This sequence belongs to the purine/pyrimidine phosphoribosyltransferase family. Xpt subfamily. As to quaternary structure, homodimer.

It is found in the cytoplasm. The catalysed reaction is XMP + diphosphate = xanthine + 5-phospho-alpha-D-ribose 1-diphosphate. The protein operates within purine metabolism; XMP biosynthesis via salvage pathway; XMP from xanthine: step 1/1. Its function is as follows. Converts the preformed base xanthine, a product of nucleic acid breakdown, to xanthosine 5'-monophosphate (XMP), so it can be reused for RNA or DNA synthesis. This Acinetobacter baylyi (strain ATCC 33305 / BD413 / ADP1) protein is Xanthine phosphoribosyltransferase.